Here is a 699-residue protein sequence, read N- to C-terminus: tRNA wybutosine-synthesizing protein 4 (699 aa).

S-adenosyl-L-methionine is bound by residues R94, G120, D151, 197–198 (DL), and E224.

Belongs to the methyltransferase superfamily. LCMT family.

It carries out the reaction 7-[(3S)-3-amino-3-carboxypropyl]wyosine(37) in tRNA(Phe) + S-adenosyl-L-methionine = 7-[(3S)-(3-amino-3-methoxycarbonyl)propyl]wyosine(37) in tRNA(Phe) + S-adenosyl-L-homocysteine. The catalysed reaction is 7-[(3S)-(3-amino-3-methoxycarbonyl)propyl]wyosine(37) in tRNA(Phe) + S-adenosyl-L-methionine + CO2 = wybutosine(37) in tRNA(Phe) + S-adenosyl-L-homocysteine + 2 H(+). It participates in tRNA modification; wybutosine-tRNA(Phe) biosynthesis. In terms of biological role, probable S-adenosyl-L-methionine-dependent methyltransferase that acts as a component of the wybutosine biosynthesis pathway. Wybutosine is a hyper modified guanosine with a tricyclic base found at the 3'-position adjacent to the anticodon of eukaryotic phenylalanine tRNA. May methylate the carboxyl group of leucine residues to form alpha-leucine ester residues. The polypeptide is tRNA wybutosine-synthesizing protein 4 (PPM2) (Eremothecium gossypii (strain ATCC 10895 / CBS 109.51 / FGSC 9923 / NRRL Y-1056) (Yeast)).